A 544-amino-acid chain; its full sequence is Chaperonin GroEL (544 aa).

Residues 30–33 (TLGP), lysine 51, 87–91 (DGTTT), glycine 415, and aspartate 495 contribute to the ATP site.

It belongs to the chaperonin (HSP60) family. In terms of assembly, forms a cylinder of 14 subunits composed of two heptameric rings stacked back-to-back. Interacts with the co-chaperonin GroES.

The protein localises to the cytoplasm. The catalysed reaction is ATP + H2O + a folded polypeptide = ADP + phosphate + an unfolded polypeptide.. Functionally, together with its co-chaperonin GroES, plays an essential role in assisting protein folding. The GroEL-GroES system forms a nano-cage that allows encapsulation of the non-native substrate proteins and provides a physical environment optimized to promote and accelerate protein folding. This is Chaperonin GroEL from Neisseria meningitidis serogroup C (strain 053442).